Consider the following 179-residue polypeptide: MNATPASADDLIVIGKIYSVHGVRGEVKVFSFTDPIGNLLDYKTWTLRREGSVEKQVELVSGRLQSKFLVAKLKGLDDREEARLLSGYEICVPRNLFPDLDDGEYYWYQLEGLKVIDQLGQLLGKIDHLLETGSNDVMVVKPCAGSLDDRERLLPYTEQCVLAIDMAAGEMKVDWDADF.

The 78-residue stretch at 102-179 (DGEYYWYQLE…EMKVDWDADF (78 aa)) folds into the PRC barrel domain.

It belongs to the RimM family. In terms of assembly, binds ribosomal protein uS19.

It is found in the cytoplasm. An accessory protein needed during the final step in the assembly of 30S ribosomal subunit, possibly for assembly of the head region. Essential for efficient processing of 16S rRNA. May be needed both before and after RbfA during the maturation of 16S rRNA. It has affinity for free ribosomal 30S subunits but not for 70S ribosomes. The protein is Ribosome maturation factor RimM of Pseudomonas savastanoi pv. phaseolicola (strain 1448A / Race 6) (Pseudomonas syringae pv. phaseolicola (strain 1448A / Race 6)).